The following is a 304-amino-acid chain: N-acetylmuramic acid 6-phosphate etherase (304 aa).

One can recognise an SIS domain in the interval 58–221; it reads IVDRMKQGGR…TTASMVKMGK (164 aa). Catalysis depends on Glu86, which acts as the Proton donor. Glu117 is a catalytic residue.

It belongs to the GCKR-like family. MurNAc-6-P etherase subfamily. Homodimer.

It catalyses the reaction N-acetyl-D-muramate 6-phosphate + H2O = N-acetyl-D-glucosamine 6-phosphate + (R)-lactate. Its pathway is amino-sugar metabolism; N-acetylmuramate degradation. Its function is as follows. Specifically catalyzes the cleavage of the D-lactyl ether substituent of MurNAc 6-phosphate, producing GlcNAc 6-phosphate and D-lactate. This is N-acetylmuramic acid 6-phosphate etherase from Clostridioides difficile (strain 630) (Peptoclostridium difficile).